Here is a 339-residue protein sequence, read N- to C-terminus: Malate dehydrogenase 3, cytoplasmic (339 aa).

NAD(+)-binding positions include 22–23 (NI), D49, and G96. R105 serves as a coordination point for oxaloacetate. The NAD(+) site is built by Q119 and N138. 4 residues coordinate oxaloacetate: N138, R169, H194, and S249. H194 (proton acceptor) is an active-site residue.

The protein belongs to the LDH/MDH superfamily. MDH type 2 family. In terms of tissue distribution, expressed in rosette leaves at low levels.

Its subcellular location is the cytoplasm. The enzyme catalyses (S)-malate + NAD(+) = oxaloacetate + NADH + H(+). Functionally, catalyzes a reversible NAD-dependent dehydrogenase reaction involved in central metabolism and redox homeostasis between organelle compartments. The polypeptide is Malate dehydrogenase 3, cytoplasmic (Arabidopsis thaliana (Mouse-ear cress)).